Here is a 342-residue protein sequence, read N- to C-terminus: L-threonine 3-dehydrogenase (342 aa).

Cys-38 is a Zn(2+) binding site. Residues Thr-40 and His-43 each act as charge relay system in the active site. Residues His-63 and Glu-64 each contribute to the Zn(2+) site. NAD(+) is bound by residues Ile-175, Asp-195, Arg-200, 263-265 (LGI), and 287-288 (VY).

Belongs to the zinc-containing alcohol dehydrogenase family. Homotetramer. Zn(2+) is required as a cofactor.

It localises to the cytoplasm. The catalysed reaction is L-threonine + NAD(+) = (2S)-2-amino-3-oxobutanoate + NADH + H(+). The protein operates within amino-acid degradation; L-threonine degradation via oxydo-reductase pathway; glycine from L-threonine: step 1/2. In terms of biological role, catalyzes the NAD(+)-dependent oxidation of L-threonine to 2-amino-3-ketobutyrate. The sequence is that of L-threonine 3-dehydrogenase from Ruegeria pomeroyi (strain ATCC 700808 / DSM 15171 / DSS-3) (Silicibacter pomeroyi).